The primary structure comprises 416 residues: Serine hydroxymethyltransferase (416 aa).

(6S)-5,6,7,8-tetrahydrofolate contacts are provided by residues leucine 118 and 122 to 124 (GHL). Residue lysine 226 is modified to N6-(pyridoxal phosphate)lysine. Residue 350–352 (SPF) participates in (6S)-5,6,7,8-tetrahydrofolate binding.

It belongs to the SHMT family. In terms of assembly, homodimer. It depends on pyridoxal 5'-phosphate as a cofactor.

The protein resides in the cytoplasm. The enzyme catalyses (6R)-5,10-methylene-5,6,7,8-tetrahydrofolate + glycine + H2O = (6S)-5,6,7,8-tetrahydrofolate + L-serine. Its pathway is one-carbon metabolism; tetrahydrofolate interconversion. The protein operates within amino-acid biosynthesis; glycine biosynthesis; glycine from L-serine: step 1/1. In terms of biological role, catalyzes the reversible interconversion of serine and glycine with tetrahydrofolate (THF) serving as the one-carbon carrier. This reaction serves as the major source of one-carbon groups required for the biosynthesis of purines, thymidylate, methionine, and other important biomolecules. Also exhibits THF-independent aldolase activity toward beta-hydroxyamino acids, producing glycine and aldehydes, via a retro-aldol mechanism. The protein is Serine hydroxymethyltransferase of Sulfurovum sp. (strain NBC37-1).